The sequence spans 147 residues: uncharacterized protein (147 aa).

This is an uncharacterized protein from Caenorhabditis elegans.